The sequence spans 162 residues: uncharacterized protein (162 aa).

Positions 1 to 21 are cleaved as a signal peptide; it reads MRLCGLLIFLSYIVYVDNAVT.

This is an uncharacterized protein from Caenorhabditis elegans.